The sequence spans 476 residues: METPGASASSLLLPAASRPPRKREAGEAGAATSKQRVLDEEEYIEGLQTVIQRDFFPDVEKLQAQKEYLEAEENGDLERMRQIAIKFGSALGKMSREPPPPYVTPATFETPEVHAGTGVVGNKPRPRGRGLEDGEAGEEEEKEPLPSLDVFLSRYTSEDNASFQEIMEVAKERSRARHAWLYQAEEEFEKRQKDNLELPSAEHQAIESSQASVETWKYKAKNSLMYYPEGVPDEEQLFKKPRQVVHKNTRFLRDPFSQALSRCQLQQAAALNAQHKQGKVGPDGKELIPQESPRVGGFGFVATPSPAPGVNESPMMTWGEVENTPLRVEGSETPYVDRTPGPAFKILEPGRRERLGLKMANEAAAKNRAKKQEALRRVTENLASLTPKGLSPAMSPALQRLVSRTASKYTDRALRASYTPSPARSTHLKTPASGLQTPTSTPAPGSATRTPLTQDPASITDNLLQLPARRKASDFF.

Position 1 is an N-acetylmethionine (Met1). Residues 1 to 18 show a composition bias toward low complexity; it reads METPGASASSLLLPAASR. Disordered stretches follow at residues 1-36 and 91-148; these read METP…SKQR and LGKM…LPSL. A Phosphothreonine modification is found at Thr3. Residues 133–142 are compositionally biased toward acidic residues; the sequence is DGEAGEEEEK. Lys142 is covalently cross-linked (Glycyl lysine isopeptide (Lys-Gly) (interchain with G-Cter in SUMO2)). Residue Ser292 is modified to Phosphoserine. Position 386 is a phosphothreonine (Thr386). Ser391 and Ser395 each carry phosphoserine. A disordered region spans residues 413–465; sequence ALRASYTPSPARSTHLKTPASGLQTPTSTPAPGSATRTPLTQDPASITDNLLQ. Over residues 437–451 the composition is skewed to low complexity; sequence TPTSTPAPGSATRTP. Residues 452–463 show a composition bias toward polar residues; the sequence is LTQDPASITDNL.

This sequence belongs to the ESS2 family. As to quaternary structure, identified in the spliceosome C complex. Interacts with FRA10AC1. In terms of tissue distribution, highly expressed in heart, brain and skeletal muscle. Detected at low levels in placenta.

Its subcellular location is the nucleus. May be involved in pre-mRNA splicing. The chain is Splicing factor ESS-2 homolog from Homo sapiens (Human).